The primary structure comprises 488 residues: Glutamyl-tRNA(Gln) amidotransferase subunit A (488 aa).

Active-site charge relay system residues include lysine 77 and serine 152. Serine 176 serves as the catalytic Acyl-ester intermediate.

Belongs to the amidase family. GatA subfamily. Heterotrimer of A, B and C subunits.

It carries out the reaction L-glutamyl-tRNA(Gln) + L-glutamine + ATP + H2O = L-glutaminyl-tRNA(Gln) + L-glutamate + ADP + phosphate + H(+). Allows the formation of correctly charged Gln-tRNA(Gln) through the transamidation of misacylated Glu-tRNA(Gln) in organisms which lack glutaminyl-tRNA synthetase. The reaction takes place in the presence of glutamine and ATP through an activated gamma-phospho-Glu-tRNA(Gln). In Streptococcus suis (strain 05ZYH33), this protein is Glutamyl-tRNA(Gln) amidotransferase subunit A.